The primary structure comprises 140 residues: Protein BIC1 (140 aa).

Residues 1–10 are compositionally biased toward polar residues; that stretch reads MMNIDDTTSP. The tract at residues 1 to 71 is disordered; it reads MMNIDDTTSP…RVDTGRERLK (71 aa). A compositionally biased stretch (basic and acidic residues) spans 42–68; the sequence is ADKKDLALLEEKPKQSQEEDRVDTGRE.

Interacts with CRY2 in both darkness and light.

It localises to the nucleus. Regulates the blue-light dependent dimerization of CRY2 and formation of photobodies. Interacts with photoexited CRY2 to inhibit its activity. Inhibits CRY phosphorylation. The chain is Protein BIC1 from Arabidopsis thaliana (Mouse-ear cress).